A 265-amino-acid polypeptide reads, in one-letter code: Glutamate racemase (265 aa).

Residues 9-10 and 41-42 each bind substrate; these read DS and YS. The active-site Proton donor/acceptor is the C73. 74-75 serves as a coordination point for substrate; sequence NT. The active-site Proton donor/acceptor is the C184. 185-186 contacts substrate; sequence TH.

Belongs to the aspartate/glutamate racemases family.

It catalyses the reaction L-glutamate = D-glutamate. The protein operates within cell wall biogenesis; peptidoglycan biosynthesis. In terms of biological role, provides the (R)-glutamate required for cell wall biosynthesis. This Actinobacillus pleuropneumoniae serotype 3 (strain JL03) protein is Glutamate racemase.